We begin with the raw amino-acid sequence, 517 residues long: Pentatricopeptide repeat-containing protein At1g77360, mitochondrial (517 aa).

The N-terminal 59 residues, 1–59, are a transit peptide targeting the mitochondrion; that stretch reads MKRFRIRSVDFRQLVNFFSFMRWECSSSATVWVRFNMTIRIINRQSRFCCKSFLSARLY. PPR repeat units lie at residues 133–163, 167–201, 202–232, 236–270, 271–305, 306–340, 341–375, 376–406, 410–444, and 445–479; these read SVRAYHMMIESTAKIRQYKLMWDLINAMRKK, NVETFCIVMRKYARAQKVDEAIYAFNVMEKYDLPP, NLVAFNGLLSALCKSKNVRKAQEVFENMRDR, DSKTYSILLEGWGKEPNLPKAREVFREMIDAGCHP, DIVTYSIMVDILCKAGRVDEALGIVRSMDPSICKP, TTFIYSVLVHTYGTENRLEEAVDTFLEMERSGMKA, DVAVFNSLIGAFCKANRMKNVYRVLKEMKSKGVTP, NSKSCNIILRHLIERGEKDEAFDVFRKMIKV, DADTYTMVIKMFCEKKEMETADKVWKYMRKKGVFP, and SMHTFSVLINGLCEERTTQKACVLLEEMIEMGIRP.

Belongs to the PPR family. P subfamily.

The protein resides in the mitochondrion. The chain is Pentatricopeptide repeat-containing protein At1g77360, mitochondrial from Arabidopsis thaliana (Mouse-ear cress).